Here is a 344-residue protein sequence, read N- to C-terminus: Putative cyclin-Y-like protein 3 (344 aa).

Positions 40–170 (ERYANRSLAI…FLELLEFNIH (131 aa)) constitute a Cyclin N-terminal domain.

It belongs to the cyclin family. Cyclin Y subfamily.

This is Putative cyclin-Y-like protein 3 (CCNYL3) from Homo sapiens (Human).